A 343-amino-acid polypeptide reads, in one-letter code: Adenosine kinase (343 aa).

Aspartate 296 is a catalytic residue.

This sequence belongs to the carbohydrate kinase PfkB family. Requires Mg(2+) as cofactor.

The catalysed reaction is adenosine + ATP = AMP + ADP + H(+). Its pathway is purine metabolism; AMP biosynthesis via salvage pathway; AMP from adenosine: step 1/1. Functionally, ATP dependent phosphorylation of adenosine and other related nucleoside analogs to monophosphate derivatives. Can also act on the cytokinin isopentenyladenosine to produce isopentenyladenosine monophosphate. In Physcomitrium patens (Spreading-leaved earth moss), this protein is Adenosine kinase (ADK).